Reading from the N-terminus, the 423-residue chain is Protein MANNAN SYNTHESIS-RELATED 2 (423 aa).

Residues 1–6 (MGVDLR) lie on the Cytoplasmic side of the membrane. Residues 7 to 26 (QVVAGILTITMFVMLGQMLH) form a helical; Signal-anchor for type II membrane protein membrane-spanning segment. Residues 27 to 423 (RDYFDAVQEK…KNHLAYSCFC (397 aa)) lie on the Lumenal side of the membrane. 264-266 (DLR) is a substrate binding site.

It belongs to the glycosyltransferase GT106 family. Widely expressed.

It is found in the golgi apparatus membrane. The protein operates within glycan biosynthesis. Functionally, glycosyltransferase involved in mannan biosynthesis. The sequence is that of Protein MANNAN SYNTHESIS-RELATED 2 from Arabidopsis thaliana (Mouse-ear cress).